Here is a 209-residue protein sequence, read N- to C-terminus: MSLPVTLSALDLGALLCSRICHDIISPVGAINNGLELLEEGGADEDAMALIKSSARNASARLQFARIAFGAAGSAGVQIDTGDAQNVATEYFRNEKPEFTWEGARVLLPKNKVKLLLNMLLIGNGAIPRGGSLAVRLEGSDTDPRFVITVKGRMLRVPPKFLELHSGAAPEEPIDAHSVQPYYTLLLAEEAGMKISIHATAEDIVFSAE.

Phosphohistidine is present on histidine 22.

This sequence belongs to the ChpT phosphotransferase family. As to quaternary structure, homodimer. Forms an asymmetric heterotetramer with CtrA (2:2). There are at least two modes of interaction between ChpT and CtrA, only one of which is competent to catalyze His-Asp phosphoryl transfer. Post-translationally, is phosphorylated by CckA-P on His-22.

Its subcellular location is the cytoplasm. Component of a regulatory phosphorelay system that controls B.abortus cell growth, division, and intracellular survival inside mammalian host cells. This signaling pathway is composed of CckA, ChpT, CtrA and CpdR. ChpT efficiently and specifically shuttles phosphoryl groups from the CckA kinase to the receiver domains of both CtrA and CpdR. Does not bind ATP. Overexpression of chpT results in a defect in cell morphology, DNA content, and intracellular survival in human macrophages. This chain is Protein phosphotransferase ChpT, found in Brucella abortus (strain 2308).